The chain runs to 323 residues: tRNA U34 carboxymethyltransferase (323 aa).

Carboxy-S-adenosyl-L-methionine is bound by residues lysine 91, tryptophan 105, lysine 110, glycine 130, isoleucine 181–glutamate 182, methionine 196, tyrosine 200, and arginine 315.

Belongs to the class I-like SAM-binding methyltransferase superfamily. CmoB family. In terms of assembly, homotetramer.

The enzyme catalyses carboxy-S-adenosyl-L-methionine + 5-hydroxyuridine(34) in tRNA = 5-carboxymethoxyuridine(34) in tRNA + S-adenosyl-L-homocysteine + H(+). Its function is as follows. Catalyzes carboxymethyl transfer from carboxy-S-adenosyl-L-methionine (Cx-SAM) to 5-hydroxyuridine (ho5U) to form 5-carboxymethoxyuridine (cmo5U) at position 34 in tRNAs. In Edwardsiella ictaluri (strain 93-146), this protein is tRNA U34 carboxymethyltransferase.